The following is a 329-amino-acid chain: DNA-directed RNA polymerase subunit alpha (329 aa).

An alpha N-terminal domain (alpha-NTD) region spans residues 1–234 (MQGSVTEFLK…EQLDAFVELR (234 aa)). Positions 248 to 329 (FDPILLRPVD…WPPASLADDL (82 aa)) are alpha C-terminal domain (alpha-CTD).

It belongs to the RNA polymerase alpha chain family. As to quaternary structure, homodimer. The RNAP catalytic core consists of 2 alpha, 1 beta, 1 beta' and 1 omega subunit. When a sigma factor is associated with the core the holoenzyme is formed, which can initiate transcription.

It carries out the reaction RNA(n) + a ribonucleoside 5'-triphosphate = RNA(n+1) + diphosphate. Functionally, DNA-dependent RNA polymerase catalyzes the transcription of DNA into RNA using the four ribonucleoside triphosphates as substrates. The protein is DNA-directed RNA polymerase subunit alpha of Shewanella putrefaciens (strain CN-32 / ATCC BAA-453).